The following is a 140-amino-acid chain: Lymphocyte antigen 6H (140 aa).

The signal sequence occupies residues 1 to 25 (MLPAAMKGLGLALLAVLLCSAPAHG). The 66-residue stretch at 26–91 (LWCQDCTLTT…RHFFSDYLMG (66 aa)) folds into the UPAR/Ly6 domain. Cystine bridges form between Cys-28-Cys-52, Cys-31-Cys-40, Cys-45-Cys-73, Cys-77-Cys-104, and Cys-105-Cys-110. A glycan (N-linked (GlcNAc...) asparagine) is linked at Asn-36. Gly-115 carries GPI-anchor amidated glycine lipidation. A propeptide spans 116-140 (AGHSPWALAGGLLLSLGPALLWAGP) (removed in mature form).

Interacts with CHRNA4 and CHRNA7. In terms of tissue distribution, highly expressed in brain (cerebral cortex, amygdala, hippocampus and subthalamic nucleus) and in acute human leukemic cell line MOLT-3. Also found in lower levels in testis, pancreas, small intestine and colon.

The protein resides in the cell membrane. In terms of biological role, believed to act as a modulator of nicotinic acetylcholine receptors (nAChRs) activity. In vitro inhibits alpha-3:beta-4-containing nAChRs maximum response. May play a role in the intracellular trafficking of alpha-7-containing nAChRs and may inhibit their expression at the cell surface. Seems to inhibit alpha-7/CHRNA7 signaling in hippocampal neurons. The chain is Lymphocyte antigen 6H (LY6H) from Homo sapiens (Human).